We begin with the raw amino-acid sequence, 637 residues long: Threonine--tRNA ligase (637 aa).

In terms of domain architecture, TGS spans 1 to 61 (MLNITLPDGS…VEDSAVQIIT (61 aa)). Positions 242 to 533 (DHRKLGKQLD…LIENHAGSFP (292 aa)) are catalytic. Residues C333, H384, and H510 each coordinate Zn(2+).

Belongs to the class-II aminoacyl-tRNA synthetase family. As to quaternary structure, homodimer. The cofactor is Zn(2+).

It is found in the cytoplasm. The enzyme catalyses tRNA(Thr) + L-threonine + ATP = L-threonyl-tRNA(Thr) + AMP + diphosphate + H(+). Functionally, catalyzes the attachment of threonine to tRNA(Thr) in a two-step reaction: L-threonine is first activated by ATP to form Thr-AMP and then transferred to the acceptor end of tRNA(Thr). Also edits incorrectly charged L-seryl-tRNA(Thr). The protein is Threonine--tRNA ligase of Neisseria meningitidis serogroup B (strain ATCC BAA-335 / MC58).